Here is a 93-residue protein sequence, read N- to C-terminus: MKFAVILLFSLVVLTVASESVEEVRREIDIEDLPEQQRGCADLRQPCTEGDDCSCCGSEGVCNCSHPHKKGCYCKTAGPLEKLAKKFKGCKNK.

Positions Met1–Ser18 are cleaved as a signal peptide. A propeptide spanning residues Glu19–Arg38 is cleaved from the precursor.

Belongs to the neurotoxin 31 family. Post-translationally, contains 5 disulfide bonds. As to expression, expressed by the venom gland.

Its subcellular location is the secreted. This is U12-lycotoxin-Ls1a from Lycosa singoriensis (Wolf spider).